Consider the following 705-residue polypeptide: Catalase C (705 aa).

The tract at residues 1–31 (MAKKPSAPNNTKPATIHDQKATRGNGGELHQ) is disordered. Residues His88 and Asn161 contribute to the active site. Position 375 (Tyr375) interacts with heme.

The protein belongs to the catalase family. HPII subfamily. The cofactor is heme.

The enzyme catalyses 2 H2O2 = O2 + 2 H2O. Decomposes hydrogen peroxide into water and oxygen; serves to protect cells from the toxic effects of hydrogen peroxide. Could protect cells in nodules which have a high potential to produce hydrogen peroxide because of the strong reducing conditions required for nitrogen fixation and the action of several proteins. In Rhizobium meliloti (strain 1021) (Ensifer meliloti), this protein is Catalase C (katE).